Reading from the N-terminus, the 99-residue chain is Endothelin receptor type B (99 aa).

Topologically, residues P1–K8 are extracellular. Cysteines 7 and 88 form a disulfide. Residues L9 to I30 traverse the membrane as a helical segment. At D31–T51 the chain is on the cytoplasmic side. The chain crosses the membrane as a helical span at residues A52–I76. At T77–M99 the chain is on the extracellular side.

The protein belongs to the G-protein coupled receptor 1 family. Endothelin receptor subfamily. EDNRB sub-subfamily.

It localises to the cell membrane. Its function is as follows. Non-specific receptor for endothelin 1, 2, and 3. Mediates its action by association with G proteins that activate a phosphatidylinositol-calcium second messenger system. This chain is Endothelin receptor type B (EDNRB), found in Macaca fascicularis (Crab-eating macaque).